We begin with the raw amino-acid sequence, 382 residues long: uncharacterized protein (382 aa).

A signal peptide spans 1–25 (MKKWMAAVFVMMLMLCFGGIENVKA). The Nucleophile role is filled by Ser186. Active-site residues include Asp354 and His357.

The protein belongs to the 'GDSL' lipolytic enzyme family.

This is an uncharacterized protein from Bacillus subtilis (strain 168).